The following is a 135-amino-acid chain: Probable 5-hydroxyisourate hydrolase R09H10.3 (135 aa).

Residues 1–20 (MNKFSLFFALTATLMTITES) form the signal peptide. Substrate contacts are provided by H30, R68, and Y132.

This sequence belongs to the transthyretin family. 5-hydroxyisourate hydrolase subfamily. Homotetramer.

The enzyme catalyses 5-hydroxyisourate + H2O = 5-hydroxy-2-oxo-4-ureido-2,5-dihydro-1H-imidazole-5-carboxylate + H(+). Its function is as follows. Catalyzes the hydrolysis of 5-hydroxyisourate (HIU) to 2-oxo-4-hydroxy-4-carboxy-5-ureidoimidazoline (OHCU). The sequence is that of Probable 5-hydroxyisourate hydrolase R09H10.3 from Caenorhabditis elegans.